The chain runs to 337 residues: Ketol-acid reductoisomerase (NADP(+)) (337 aa).

The KARI N-terminal Rossmann domain maps to 3–183; it reads VEMFYDDDAD…GGARAGVIKT (181 aa). Residues 26-29, Lys-49, Ser-52, Ser-54, and 84-87 each bind NADP(+); these read YGSQ and DTAQ. The active site involves His-109. NADP(+) is bound at residue Gly-135. The 146-residue stretch at 184-329 folds into the KARI C-terminal knotted domain; that stretch reads TFKEETETDL…KKLRDLMSWV (146 aa). Mg(2+) is bound by residues Asp-192, Glu-196, Glu-228, and Glu-232. Ser-253 is a binding site for substrate.

Belongs to the ketol-acid reductoisomerase family. Mg(2+) serves as cofactor.

It carries out the reaction (2R)-2,3-dihydroxy-3-methylbutanoate + NADP(+) = (2S)-2-acetolactate + NADPH + H(+). It catalyses the reaction (2R,3R)-2,3-dihydroxy-3-methylpentanoate + NADP(+) = (S)-2-ethyl-2-hydroxy-3-oxobutanoate + NADPH + H(+). It participates in amino-acid biosynthesis; L-isoleucine biosynthesis; L-isoleucine from 2-oxobutanoate: step 2/4. The protein operates within amino-acid biosynthesis; L-valine biosynthesis; L-valine from pyruvate: step 2/4. Involved in the biosynthesis of branched-chain amino acids (BCAA). Catalyzes an alkyl-migration followed by a ketol-acid reduction of (S)-2-acetolactate (S2AL) to yield (R)-2,3-dihydroxy-isovalerate. In the isomerase reaction, S2AL is rearranged via a Mg-dependent methyl migration to produce 3-hydroxy-3-methyl-2-ketobutyrate (HMKB). In the reductase reaction, this 2-ketoacid undergoes a metal-dependent reduction by NADPH to yield (R)-2,3-dihydroxy-isovalerate. This chain is Ketol-acid reductoisomerase (NADP(+)), found in Mycolicibacterium smegmatis (strain ATCC 700084 / mc(2)155) (Mycobacterium smegmatis).